A 105-amino-acid chain; its full sequence is Vacuolar ATPase assembly integral membrane protein VMA21 homolog (105 aa).

Residues 1–26 (MSTKNKKAAGGNGVAPKQTRQQSHDS) form a disordered region. Topologically, residues 1 to 36 (MSTKNKKAAGGNGVAPKQTRQQSHDSQDYSSFKTVL) are cytoplasmic. Residues 37-57 (FYCMLIVFLPVLTFFVLKGFV) form a helical membrane-spanning segment. Over 58–68 (LDQFLDISEVK) the chain is Lumenal. The helical transmembrane segment at 69–89 (VNIASAVGAVVALHIALGLYI) threads the bilayer. Residues 90-105 (YRAYFGAPGSKGSKTD) are Cytoplasmic-facing.

Belongs to the VMA21 family.

The protein localises to the endoplasmic reticulum membrane. The protein resides in the endoplasmic reticulum-Golgi intermediate compartment membrane. It localises to the cytoplasmic vesicle. It is found in the COPII-coated vesicle membrane. Functionally, required for the assembly of the V0 complex of the vacuolar ATPase (V-ATPase) in the endoplasmic reticulum. The protein is Vacuolar ATPase assembly integral membrane protein VMA21 homolog of Drosophila melanogaster (Fruit fly).